We begin with the raw amino-acid sequence, 113 residues long: Large ribosomal subunit protein uL24 (113 aa).

The protein belongs to the universal ribosomal protein uL24 family. In terms of assembly, part of the 50S ribosomal subunit.

One of two assembly initiator proteins, it binds directly to the 5'-end of the 23S rRNA, where it nucleates assembly of the 50S subunit. In terms of biological role, one of the proteins that surrounds the polypeptide exit tunnel on the outside of the subunit. This Rickettsia prowazekii (strain Madrid E) protein is Large ribosomal subunit protein uL24.